Reading from the N-terminus, the 328-residue chain is DNA-directed RNA polymerase subunit alpha (328 aa).

An alpha N-terminal domain (alpha-NTD) region spans residues 1–234 (MQTAVNEFLT…QQLAVFVDLE (234 aa)). The segment at 248–328 (IDPILLRPVD…NWPPASLKND (81 aa)) is alpha C-terminal domain (alpha-CTD).

The protein belongs to the RNA polymerase alpha chain family. As to quaternary structure, homodimer. The RNAP catalytic core consists of 2 alpha, 1 beta, 1 beta' and 1 omega subunit. When a sigma factor is associated with the core the holoenzyme is formed, which can initiate transcription.

The enzyme catalyses RNA(n) + a ribonucleoside 5'-triphosphate = RNA(n+1) + diphosphate. Its function is as follows. DNA-dependent RNA polymerase catalyzes the transcription of DNA into RNA using the four ribonucleoside triphosphates as substrates. This Cellvibrio japonicus (strain Ueda107) (Pseudomonas fluorescens subsp. cellulosa) protein is DNA-directed RNA polymerase subunit alpha.